The sequence spans 556 residues: MKTDINIAQAATLKPIQEIAETIGLSEDSLELYGKYKAKIDFPTLQSLEAQPEGKLILVTSINPTPAGEGKSTVTIGLGDALNQINKKTVIALREPSLGPVMGIKGGATGGGYAQVLPMEEINLHFTGDMHAITTANNALAALLDNHLQQGNELKIDSRRVIWKRAVDLNDRALRQVVVGLGGPFQGVPREDGFDITVASEIMAILCLAQNLTDLKERLSRIIVAYNDQREPVTVKDLNVAGALTLLLKDALKPNLVQTIEGTPAFVHGGPFANIAHGCNSILATKTALHLGDYVVTEAGFGGDLGGEKFLDIKVPSLGKAPDAVVIVATIRALKMHGGLAKDQLAEENLPALQKGFANLEKHIQNMQRYDVPVVVAINEFTQDTEKEIQLLKEACQALGVPVELTSVWAQGGAGGTNLAKTVVAEIEADTKQFQPLYNPRQTIEEKIQAIVQTIYGGEQAIFSPKAQKQIADFTKNGWDQLPICMAKTQYSLSDDPQKLGRPEGFTITIRELVPKIGAGFIVALTGDILTMPGLPKVPAALNMDVDETGQASGLF.

65 to 72 (TPAGEGKS) is an ATP binding site.

This sequence belongs to the formate--tetrahydrofolate ligase family.

The enzyme catalyses (6S)-5,6,7,8-tetrahydrofolate + formate + ATP = (6R)-10-formyltetrahydrofolate + ADP + phosphate. The protein operates within one-carbon metabolism; tetrahydrofolate interconversion. This is Formate--tetrahydrofolate ligase from Enterococcus faecalis (strain ATCC 700802 / V583).